The following is a 776-amino-acid chain: Transcriptional regulator QRICH1 (776 aa).

M1 carries the post-translational modification N-acetylmethionine. The CARD domain maps to 6 to 48 (ENTISFEEYIRVKARSVPQHRMKEFLDSLASKGPEALQEFQQT). Disordered stretches follow at residues 139-164 (IQGQAPQSAAPSIQTPSLQSPSPSQL) and 218-240 (ALSPPPSQQGSPREGERRVGTAS). S345 is subject to Phosphoserine. Residues K353 and K358 each participate in a glycyl lysine isopeptide (Lys-Gly) (interchain with G-Cter in SUMO2) cross-link. Over residues 419–429 (QQQPQQQTPQE) the composition is skewed to low complexity. The tract at residues 419-441 (QQQPQQQTPQEQTPPPQQQQQQL) is disordered. S464 bears the Phosphoserine mark.

Its subcellular location is the nucleus. The protein localises to the cytoplasm. It localises to the cell membrane. Its function is as follows. Transcriptional regulator that acts as a mediator of the integrated stress response (ISR) through transcriptional control of protein homeostasis under conditions of ER stress. Controls the outcome of the unfolded protein response (UPR) which is an ER-stress response pathway. ER stress induces QRICH1 translation by a ribosome translation re-initiation mechanism in response to EIF2S1/eIF-2-alpha phosphorylation, and stress-induced QRICH1 regulates a transcriptional program associated with protein translation, protein secretion-mediated proteotoxicity and cell death during the terminal UPR. May cooperate with ATF4 transcription factor signaling to regulate ER homeostasis which is critical for cell viability. Up-regulates CASP3/caspase-3 activity in epithelial cells under ER stress. Central regulator of proteotoxicity associated with ER stress-mediated inflammatory diseases in the intestines and liver. Involved in chondrocyte hypertrophy, a process required for normal longitudinal bone growth. The polypeptide is Transcriptional regulator QRICH1 (Homo sapiens (Human)).